We begin with the raw amino-acid sequence, 776 residues long: Ankyrin repeat and EF-hand domain-containing protein 1 (776 aa).

ANK repeat units follow at residues 47–76 (NGLS…HPDV), 184–213 (TGRT…EVNA), 217–246 (DRHH…DVGL), and 250–279 (NGNT…DLKW). The EF-hand domain occupies 335–369 (EREAFLREAFAVLDRGDGSISKNDFVMVLEERQDY). ANK repeat units follow at residues 524–553 (YYKT…NVNA), 557–586 (FLWT…LIDA), 590–619 (NNST…KFQL), and 623–652 (KGHS…NLPK).

This chain is Ankyrin repeat and EF-hand domain-containing protein 1 (ANKEF1), found in Homo sapiens (Human).